Consider the following 402-residue polypeptide: Tryptophan synthase beta chain (402 aa).

Residue lysine 91 is modified to N6-(pyridoxal phosphate)lysine.

This sequence belongs to the TrpB family. As to quaternary structure, tetramer of two alpha and two beta chains. It depends on pyridoxal 5'-phosphate as a cofactor.

The enzyme catalyses (1S,2R)-1-C-(indol-3-yl)glycerol 3-phosphate + L-serine = D-glyceraldehyde 3-phosphate + L-tryptophan + H2O. The protein operates within amino-acid biosynthesis; L-tryptophan biosynthesis; L-tryptophan from chorismate: step 5/5. Functionally, the beta subunit is responsible for the synthesis of L-tryptophan from indole and L-serine. This is Tryptophan synthase beta chain (trpB) from Lactococcus lactis subsp. lactis (strain IL1403) (Streptococcus lactis).